We begin with the raw amino-acid sequence, 176 residues long: Inner membrane-spanning protein YciB (176 aa).

Helical transmembrane passes span 23–43 (MIAA…FLYW), 50–70 (TMQW…IVLG), 74–94 (FIMW…WGSH), 119–139 (LTYM…FVFT), and 150–170 (MFGS…YLST).

This sequence belongs to the YciB family.

Its subcellular location is the cell inner membrane. In terms of biological role, plays a role in cell envelope biogenesis, maintenance of cell envelope integrity and membrane homeostasis. The sequence is that of Inner membrane-spanning protein YciB from Neisseria meningitidis serogroup A / serotype 4A (strain DSM 15465 / Z2491).